Here is a 117-residue protein sequence, read N- to C-terminus: DNA-directed RNA polymerase II subunit RPB11 (117 aa).

Met-1 is subject to N-acetylmethionine.

Belongs to the archaeal Rpo11/eukaryotic RPB11/RPC19 RNA polymerase subunit family. In terms of assembly, component of the RNA polymerase II (Pol II) core complex consisting of 12 subunits: a ten-subunit catalytic core composed of POLR2A/RPB1, POLR2B/RPB2, POLR2C/RPB3, POLR2I/RPB9, POLR2J/RPB11, POLR2E/RPABC1, POLR2F/RPABC2, POLR2H/RPABC3, POLR2K/RPABC4 and POLR2L/RPABC5 and a mobile stalk composed of two subunits POLR2D/RPB4 and POLR2G/RPB7, protruding from the core and functioning primarily in transcription initiation. Part of Pol II(G) complex, in which Pol II core associates with an additional subunit POLR2M; unlike conventional Pol II, Pol II(G) functions as a transcriptional repressor. Part of TBP-based Pol II pre-initiation complex (PIC), in which Pol II core assembles with general transcription factors and other specific initiation factors including GTF2E1, GTF2E2, GTF2F1, GTF2F2, TCEA1, ERCC2, ERCC3, GTF2H2, GTF2H3, GTF2H4, GTF2H5, GTF2A1, GTF2A2, GTF2B and TBP; this large multi-subunit PIC complex mediates DNA unwinding and targets Pol II core to the transcription start site where the first phosphodiester bond forms. Interacts with PTPN6; this interaction promotes the recruitment of RNA pol II to the PCK1 promoter.

The protein resides in the nucleus. DNA-dependent RNA polymerase catalyzes the transcription of DNA into RNA using the four ribonucleoside triphosphates as substrates. Component of RNA polymerase II which synthesizes mRNA precursors and many functional non-coding RNAs. Pol II is the central component of the basal RNA polymerase II transcription machinery. It is composed of mobile elements that move relative to each other. POLR2J/RPB11 is part of the core element with the central large cleft. The polypeptide is DNA-directed RNA polymerase II subunit RPB11 (POLR2J) (Bos taurus (Bovine)).